The chain runs to 174 residues: Large ribosomal subunit protein uL10 (174 aa).

It belongs to the universal ribosomal protein uL10 family. Part of the ribosomal stalk of the 50S ribosomal subunit. The N-terminus interacts with L11 and the large rRNA to form the base of the stalk. The C-terminus forms an elongated spine to which L12 dimers bind in a sequential fashion forming a multimeric L10(L12)X complex.

In terms of biological role, forms part of the ribosomal stalk, playing a central role in the interaction of the ribosome with GTP-bound translation factors. The polypeptide is Large ribosomal subunit protein uL10 (Syntrophus aciditrophicus (strain SB)).